Here is an 842-residue protein sequence, read N- to C-terminus: Elongation factor 2 (842 aa).

The tr-type G domain occupies 17-253 (TNVRNMSVIA…LWGDSYFNPK (237 aa)). GTP-binding positions include 26–33 (AHVDHGKS), 158–161 (NKVD), and 213–215 (SGL). H699 is modified (diphthamide).

The protein belongs to the TRAFAC class translation factor GTPase superfamily. Classic translation factor GTPase family. EF-G/EF-2 subfamily.

It is found in the cytoplasm. The enzyme catalyses GTP + H2O = GDP + phosphate + H(+). Catalyzes the GTP-dependent ribosomal translocation step during translation elongation. During this step, the ribosome changes from the pre-translocational (PRE) to the post-translocational (POST) state as the newly formed A-site-bound peptidyl-tRNA and P-site-bound deacylated tRNA move to the P and E sites, respectively. Catalyzes the coordinated movement of the two tRNA molecules, the mRNA and conformational changes in the ribosome. The polypeptide is Elongation factor 2 (EFT1) (Komagataella pastoris (Yeast)).